Here is a 228-residue protein sequence, read N- to C-terminus: Probable septum site-determining protein MinC (228 aa).

The protein belongs to the MinC family. In terms of assembly, interacts with MinD and FtsZ.

Cell division inhibitor that blocks the formation of polar Z ring septums. Rapidly oscillates between the poles of the cell to destabilize FtsZ filaments that have formed before they mature into polar Z rings. Prevents FtsZ polymerization. The sequence is that of Probable septum site-determining protein MinC from Bacillus anthracis (strain A0248).